We begin with the raw amino-acid sequence, 883 residues long: Mitogen-activated protein kinase kinase kinase YODA (883 aa).

3 disordered regions span residues 28–193, 303–364, and 376–396; these read GFAS…AEMF, CSPE…PPLL, and SAAT…TVSP. A compositionally biased stretch (low complexity) spans 57-72; sequence SRLPSRSPSPSTRVSR. A compositionally biased stretch (polar residues) spans 94–105; the sequence is VTSTDSGMNGSQ. Residues 143-165 show a composition bias toward low complexity; that stretch reads SVSSGSSVGDIPSDSLLSPLASD. Composition is skewed to polar residues over residues 167–189 and 314–328; these read ENGN…NKNS and RMTS…QSGA. Positions 400-656 constitute a Protein kinase domain; the sequence is WKKGRLLGMG…AAQLLDHAFV (257 aa). Residues 406-414 and lysine 429 contribute to the ATP site; that span reads LGMGSFGHV. Aspartate 525 acts as the Proton acceptor in catalysis. Disordered regions lie at residues 712-773 and 787-838; these read GSGF…GAIP and EGIG…IQPG. The span at 733 to 756 shows a compositional bias: low complexity; it reads SPIFHSHSPHISGRRSPSPISSPH.

Belongs to the protein kinase superfamily. STE Ser/Thr protein kinase family. MAP kinase kinase kinase subfamily. As to quaternary structure, interacts with ASK7. Interacts with BSK12/SSP. Binds to BASL and MPK6. As to expression, expressed in roots, leaves, guard cells, stems, flowers and siliques.

It is found in the cytoplasm. The protein localises to the cell cortex. It localises to the cell membrane. The catalysed reaction is L-seryl-[protein] + ATP = O-phospho-L-seryl-[protein] + ADP + H(+). The enzyme catalyses L-threonyl-[protein] + ATP = O-phospho-L-threonyl-[protein] + ADP + H(+). With respect to regulation, contains an N-terminal autoinhibitory domain. Functions in a MAP kinase cascade that acts as a molecular switch to regulate the first cell fate decisions in the zygote and the early embryo. Promotes elongation of the zygote and development of its basal daughter cell into the extra-embryonic suspensor. In stomatal development, acts downstream of the LRR receptor TMM, but upstream of the MKK4/MKK5-MPK3/MPK6 module to regulate stomatal cell fate before the guard mother cell (GMC) is specified. Plays a central role in both guard cell identity and pattern formation. This MAPK cascade also functions downstream of the ER receptor in regulating coordinated local cell proliferation, which shapes the morphology of plant organs. Upon brassinosteroid signaling, is inhibited by phosphorylation of its auto-inhibitory N-terminal domain by the GSK3-like kinase ASK7. The chain is Mitogen-activated protein kinase kinase kinase YODA from Arabidopsis thaliana (Mouse-ear cress).